Consider the following 214-residue polypeptide: Peptide methionine sulfoxide reductase B1, chloroplastic (214 aa).

Residues 1–53 (MAMRQYAAATAASSSFRARPRARPSCLPAAALPLAPCCGVAWSRASYRRASVR) constitute a chloroplast transit peptide. The segment covering 58-81 (ASSSSSSSSSSPSPQGQAQAQAQG) has biased composition (low complexity). Residues 58-91 (ASSSSSSSSSSPSPQGQAQAQAQGKPNYSTSLTD) are disordered. The 123-residue stretch at 91–213 (DEEWRKRLTK…NSASLKLKKT (123 aa)) folds into the MsrB domain. Residues cysteine 130, cysteine 133, cysteine 179, and cysteine 182 each coordinate Zn(2+). Catalysis depends on cysteine 202, which acts as the Nucleophile.

Belongs to the MsrB Met sulfoxide reductase family. Requires Zn(2+) as cofactor. Expressed in leaves and flowers.

Its subcellular location is the plastid. It is found in the chloroplast. It carries out the reaction L-methionyl-[protein] + [thioredoxin]-disulfide + H2O = L-methionyl-(R)-S-oxide-[protein] + [thioredoxin]-dithiol. Its function is as follows. Catalyzes the reduction of methionine sulfoxide (MetSO) to methionine in proteins. Involved in abiotic stress response. Plays a protective role against oxidative stress by restoring activity to proteins that have been inactivated by methionine oxidation. MSRB family specifically reduces the MetSO R-enantiomer. The sequence is that of Peptide methionine sulfoxide reductase B1, chloroplastic from Oryza sativa subsp. japonica (Rice).